The chain runs to 408 residues: MNLSKINTLLIASFFLFLTATVISHPQASFEASKTGLSMWWEVVFPSLLPFFILSELLIGFGIVRFVGVLLEPFMRPIFRVPGVGGFVLAMGMASGNPAGAKLTARLRQENQISRVEAERLASFTNSSNPLFIFGAVAVGFFQNASLGILLASAHYLGNLAVGLTMRSYGRKEEQHLRRKKTIPFPSVKDALHALHTARLAEKRPLGKILGDAVTSSVQTLLMVGGFIILFSVFNRLLSVVQLTDVLSVFTKGALTLFQLPTQLDIPLLSGMFEITLGSKLVSETDVSLLQKAIIVSFILGFSGFSVQAQVAGILSETDIRFKPFFIARLLQGVYAAVFVMLLWKPLYTAWHDPYQYVFKSLNSSDMSTAFINGWNLLVQIGPAVTLCALFTYIIIFSYRLTNGTKKG.

Transmembrane regions (helical) follow at residues 6 to 26, 43 to 63, 81 to 101, 131 to 151, 214 to 234, 294 to 314, 324 to 344, and 377 to 397; these read INTLLIASFFLFLTATVISHP, VVFPSLLPFFILSELLIGFGI, VPGVGGFVLAMGMASGNPAGA, LFIFGAVAVGFFQNASLGILL, VTSSVQTLLMVGGFIILFSVF, IIVSFILGFSGFSVQAQVAGI, PFFIARLLQGVYAAVFVMLLW, and LLVQIGPAVTLCALFTYIIIF.

The protein localises to the cell membrane. Its function is as follows. Required for spore cortex formation. The chain is Sporulation integral membrane protein YlbJ (ylbJ) from Bacillus subtilis (strain 168).